The following is a 29-amino-acid chain: Cytochrome b6-f complex subunit 8 (29 aa).

The chain crosses the membrane as a helical span at residues 3–23; that stretch reads LITITWASVMVAFTFSLSLVV.

The protein belongs to the PetN family. In terms of assembly, the 4 large subunits of the cytochrome b6-f complex are cytochrome b6, subunit IV (17 kDa polypeptide, PetD), cytochrome f and the Rieske protein, while the 4 small subunits are PetG, PetL, PetM and PetN. The complex functions as a dimer.

The protein localises to the plastid. It is found in the chloroplast thylakoid membrane. Component of the cytochrome b6-f complex, which mediates electron transfer between photosystem II (PSII) and photosystem I (PSI), cyclic electron flow around PSI, and state transitions. The polypeptide is Cytochrome b6-f complex subunit 8 (Chaetosphaeridium globosum (Charophycean green alga)).